The sequence spans 269 residues: uncharacterized protein (269 aa).

A run of 4 helical transmembrane segments spans residues 64 to 84 (FVYFLFFLCFFLNNVLFLAGV), 125 to 145 (YGIANLVFGLISLALLVFLSF), 169 to 189 (FFISIVVYLLWILLMVLFLVL), and 230 to 250 (VFATAWAISLVFYSFFFIAIF).

Its subcellular location is the cell membrane. This is an uncharacterized protein from Mycoplasma genitalium (strain ATCC 33530 / DSM 19775 / NCTC 10195 / G37) (Mycoplasmoides genitalium).